A 307-amino-acid polypeptide reads, in one-letter code: Taste receptor type 2 member 10 (307 aa).

Topologically, residues 1-6 (MLRVVE) are extracellular. A helical membrane pass occupies residues 7–27 (GIFIFVVISEXVFGVLGNGFI). At 28–42 (GLVNCIDCAKNKLST) the chain is on the cytoplasmic side. The chain crosses the membrane as a helical span at residues 43–63 (IGFILTGLAISRIFLIWIIIT). The Extracellular segment spans residues 64 to 100 (DGFIQIFSPDIYASGNLIEYISYFWVIGNQSSMWFAT). Asn-92 carries an N-linked (GlcNAc...) asparagine glycan. Residues 101–121 (SLSIFYFLKIANFSNYIFLWL) form a helical membrane-spanning segment. Residues 122 to 126 (KSRTN) lie on the Cytoplasmic side of the membrane. The helical transmembrane segment at 127-147 (MVLPFMIVFLLISSLLNFAHI) threads the bilayer. Over 148–179 (AKILNDYKMKNDTVWDLNMYKSEYFIKQILLN) the chain is Extracellular. The N-linked (GlcNAc...) asparagine glycan is linked to Asn-158. The helical transmembrane segment at 180–200 (LGVIFFFTLSLITCVFLIISL) threads the bilayer. The Cytoplasmic portion of the chain corresponds to 201–227 (WRHNRQMQSNVTGLRDSNTEAHVKAMK). Residues 228 to 248 (VLISFXILFILYFIGMAIEIS) form a helical membrane-spanning segment. Over 249 to 257 (CFTVRENKL) the chain is Extracellular. A helical membrane pass occupies residues 258–278 (LLMFGMTTTAIYPWGHSFILI). Residues 279–307 (LGNSKLKQASLRVLQQLKCCEKRKNLRVT) lie on the Cytoplasmic side of the membrane.

It belongs to the G-protein coupled receptor T2R family.

Its subcellular location is the membrane. Functionally, receptor that may play a role in the perception of bitterness and is gustducin-linked. May play a role in sensing the chemical composition of the gastrointestinal content. The activity of this receptor may stimulate alpha gustducin, mediate PLC-beta-2 activation and lead to the gating of TRPM5. The protein is Taste receptor type 2 member 10 (TAS2R10) of Gorilla gorilla gorilla (Western lowland gorilla).